The primary structure comprises 144 residues: Putative pre-16S rRNA nuclease (144 aa).

This sequence belongs to the YqgF nuclease family.

It localises to the cytoplasm. Its function is as follows. Could be a nuclease involved in processing of the 5'-end of pre-16S rRNA. The polypeptide is Putative pre-16S rRNA nuclease (Lacticaseibacillus casei (strain BL23) (Lactobacillus casei)).